Reading from the N-terminus, the 603-residue chain is MENNRNFFITIALSVLILAVWQYFYVLPRSEAQREAARVEQQRVEEQKKAAEAANPGAGTPAPAPGTIPNAPGGDTVTVAGRDQALAASKRVKIDTPSLEGSINLTGARLDDLKLKHYTETVDKNSPEIELLNPQALPTGYFAEIGFVGNDKTGAVPGAETVWNVDGNPTLSPSTPVTLTYTNDKGLTFKRTFSVDANYMFTVSDTVQNSGSSAVSLFNYGRVTRYDKPAVASTYVLHEGLIGFTGTEGLQEHKYASIEKDKQYQPGKATDGWLGITDKYWAVTLVPTEKQPFQPRYAFFEDGRHRYQSDFLTDAINVEAGQSATVETEVFAGAKEVAKINAYAEDRHIKRFDLLIDWGWFHFITKPMFWLIDTLYKFLGNFGLAILATTVIVKALFFPLANKSYASMANMKKVQPKMLEIREKYADDKMKQQQAMMELYKTEKINPLAGCWPVALQIPVFFSLYKVLYITIEMRHAPFFGWIQDLAAPDPTSLFNLFGLIPVTLPHMLMIGVWPLIMGVTMFLQMRMNPTPPDPTQAAIFTWMPVIFTFMMAGFPAGLVIYWAWNNMLSILQQGVIMKRQGAKIELWDNLMALFKKKPSPAE.

The helical transmembrane segment at 7 to 27 threads the bilayer; that stretch reads FFITIALSVLILAVWQYFYVL. A compositionally biased stretch (basic and acidic residues) spans 38–51; it reads RVEQQRVEEQKKAA. Residues 38 to 76 are disordered; sequence RVEQQRVEEQKKAAEAANPGAGTPAPAPGTIPNAPGGDT. The segment covering 52–74 has biased composition (low complexity); it reads EAANPGAGTPAPAPGTIPNAPGG. Transmembrane regions (helical) follow at residues 352–372, 378–398, 452–472, 497–517, and 540–560; these read FDLL…FWLI, FLGN…ALFF, WPVA…YITI, LFGL…WPLI, and IFTW…AGLV.

This sequence belongs to the OXA1/ALB3/YidC family. Type 1 subfamily. In terms of assembly, interacts with the Sec translocase complex via SecD. Specifically interacts with transmembrane segments of nascent integral membrane proteins during membrane integration.

The protein resides in the cell inner membrane. In terms of biological role, required for the insertion and/or proper folding and/or complex formation of integral membrane proteins into the membrane. Involved in integration of membrane proteins that insert both dependently and independently of the Sec translocase complex, as well as at least some lipoproteins. Aids folding of multispanning membrane proteins. This chain is Membrane protein insertase YidC, found in Mesorhizobium japonicum (strain LMG 29417 / CECT 9101 / MAFF 303099) (Mesorhizobium loti (strain MAFF 303099)).